The primary structure comprises 206 residues: Thymidylate kinase (206 aa).

ATP is bound at residue 10–17 (GIDGAGKS).

The protein belongs to the thymidylate kinase family.

It catalyses the reaction dTMP + ATP = dTDP + ADP. In terms of biological role, phosphorylation of dTMP to form dTDP in both de novo and salvage pathways of dTTP synthesis. The sequence is that of Thymidylate kinase from Neisseria gonorrhoeae (strain ATCC 700825 / FA 1090).